Consider the following 504-residue polypeptide: MTVPALASVSGLLQVASLLGLLLLLLKAAQLYLRRQWLLKALQQFPSPPSHWLYGHSREFQEESELQPLLKRVEKYPSACARWLWGTRAMVLVYDPDYMKVVLARSEPKAPVLYRLLIPWIGCGLLLLNGQMWFQRRRMLTPAFHYDILKPYVGLMAKSVQVMLDKWEQLVAQDPRLEIVGPVSLMTLDTIMKCAFSHQGSAQTDGDSQSYIQAIWDLKNLIFSRLRSAFLQNDIIYRLSPEGRQCQRACQKVHQHTDRVIQLRKTHLQKEGEMENVKKKRHLDFLDILLFARMENGNSLSDTDVRAEVDTFMAAGHDSTASGISWVLYALASNPEHQQRCREEIQGLLGDGTSITWDHLDQMPYTTMCIKEALRLYPPVPSVGRELSKPITFPDGRSLPAGIILSLSIYGLHHNPQVWPNPEEFDPSRFAPGSARHSHAFMPFSGGSRNCIGKQFAMNEMKVVVALTLLRFELAPDPSRIPVPIQGIVLKSKNGIHLNLRKIP.

2 helical membrane passes run 6-26 (LASV…LLLL) and 110-130 (APVL…LLNG). Position 451 (cysteine 451) interacts with heme.

Belongs to the cytochrome P450 family. Heme is required as a cofactor. Primarily expressed in liver. Low expression in kidney.

The protein resides in the endoplasmic reticulum membrane. It catalyses the reaction taurochenodeoxycholate + reduced [NADPH--hemoprotein reductase] + O2 = taurohyocholate + oxidized [NADPH--hemoprotein reductase] + H2O + H(+). The enzyme catalyses lithocholate + reduced [NADPH--hemoprotein reductase] + O2 = hyodeoxycholate + oxidized [NADPH--hemoprotein reductase] + H2O + H(+). Functionally, catalyzes the 6 alpha hydroxylation oxidation of taurodeoxycholate to produce the pig specific bile acid taurohyocholic acid. In Sus scrofa (Pig), this protein is Taurochenodeoxycholic 6 alpha-hydroxylase (CYP4A21).